The sequence spans 238 residues: Insulin-like growth factor-binding protein 6 (238 aa).

Positions 1–25 are cleaved as a signal peptide; sequence MTWDGLPTQPLLMLLMLLFAAGSGS. An IGFBP N-terminal domain is found at 26-108; it reads ALAGCPGCGA…LIGQGRCQRA (83 aa). 5 cysteine pairs are disulfide-bonded: C30–C33, C41–C45, C58–C64, C72–C85, and C79–C105. A disordered region spans residues 104 to 159; the sequence is RCQRARGPSEETTKESKPQGGASRSRDTNHRDRQKNPRTSAAPIRPNPVQDSEMGP. 2 stretches are compositionally biased toward basic and acidic residues: residues 110-120 and 127-138; these read GPSEETTKESK and RSRDTNHRDRQK. The 76-residue stretch at 157 to 232 folds into the Thyroglobulin type-1 domain; that stretch reads MGPCRRHLDS…SPDGQGSTQC (76 aa). 3 disulfides stabilise this stretch: C160–C188, C199–C210, and C212–C232. A disordered region spans residues 218-238; it reads QPLPVSPDGQGSTQCSARSSG. The span at 226-238 shows a compositional bias: polar residues; the sequence is GQGSTQCSARSSG.

As to quaternary structure, interacts (via C-terminal domain) with PHB2. Post-translationally, O-glycosylated.

The protein localises to the secreted. Its function is as follows. IGF-binding proteins prolong the half-life of the IGFs and have been shown to either inhibit or stimulate the growth promoting effects of the IGFs on cell culture. They alter the interaction of IGFs with their cell surface receptors. Activates the MAPK signaling pathway and induces cell migration. In Mus musculus (Mouse), this protein is Insulin-like growth factor-binding protein 6 (Igfbp6).